Here is a 473-residue protein sequence, read N- to C-terminus: MKTLYSRRRFYHVETLFNGTLALAGRDQETTGFAWWAGNARLINLSGKLLGAHVAHAGLIVFWAGAMNLFEVAHFVPEKPMYEQGLILLPHLATLGWGVGPGGEVIDTFPYFVSGVLHLISSAVLGFGGIYHALLGPETLEESFPFFGYVWKDRNKMTTILGIHLILLGIGAFLLVFKALYFGGVYDTWAPGGGDVRKITNLTLSPSIIFGYLLKSPFGGEGWIVSVDDLEDIIGGHVWLGSICILGGIWHILTKPFAWARRALVWSGEAYLSYSLGALAVFGFIACCFVWFNNTAYPSEFYGPTGPEASQAQAFTFLVRDQRLGANVGSAQGPTGLGKYLMRSPTGEVIFGGETMRFWDLRAPWLEPLRGPNGLDLSRLKKDIQPWQERRSAEYMTHAPLGSLNSVGGVATEINAVNYVSPRSWLATSHFVLGFFFFVGHLWHAGRARAAAAGFEKGIDRDFEPVLSMTPLN.

Positions 1-14 (MKTLYSRRRFYHVE) are excised as a propeptide. The residue at position 15 (Thr15) is an N-acetylthreonine. At Thr15 the chain carries Phosphothreonine. A run of 5 helical transmembrane segments spans residues 69-93 (LFEVAHFVPEKPMYEQGLILLPHLA), 134-155 (LLGPETLEESFPFFGYVWKDRN), 178-200 (KALYFGGVYDTWAPGGGDVRKIT), 255-275 (KPFAWARRALVWSGEAYLSYS), and 291-312 (WFNNTAYPSEFYGPTGPEASQA). Glu367 is a [CaMn4O5] cluster binding site. Residues 447–471 (RARAAAAGFEKGIDRDFEPVLSMTP) form a helical membrane-spanning segment.

The protein belongs to the PsbB/PsbC family. PsbC subfamily. As to quaternary structure, PSII is composed of 1 copy each of membrane proteins PsbA, PsbB, PsbC, PsbD, PsbE, PsbF, PsbH, PsbI, PsbJ, PsbK, PsbL, PsbM, PsbT, PsbX, PsbY, PsbZ, Psb30/Ycf12, at least 3 peripheral proteins of the oxygen-evolving complex and a large number of cofactors. It forms dimeric complexes. Requires Binds multiple chlorophylls and provides some of the ligands for the Ca-4Mn-5O cluster of the oxygen-evolving complex. It may also provide a ligand for a Cl- that is required for oxygen evolution. PSII binds additional chlorophylls, carotenoids and specific lipids. as cofactor.

The protein localises to the plastid. It is found in the chloroplast thylakoid membrane. In terms of biological role, one of the components of the core complex of photosystem II (PSII). It binds chlorophyll and helps catalyze the primary light-induced photochemical processes of PSII. PSII is a light-driven water:plastoquinone oxidoreductase, using light energy to abstract electrons from H(2)O, generating O(2) and a proton gradient subsequently used for ATP formation. This is Photosystem II CP43 reaction center protein from Solanum bulbocastanum (Wild potato).